The primary structure comprises 1464 residues: Neuropathy target esterase sws (1464 aa).

The Lumenal portion of the chain corresponds to 1–34 (MDVLELLRASATGCYNTIFSEAWHQYVHKQIAAA). Residues 35–55 (VYWYGALFLLGVLLFVWFLYF) traverse the membrane as a helical segment. The Cytoplasmic portion of the chain corresponds to 56-1464 (KRLARLRLRD…GNTTNNDTKN (1409 aa)). Residue 176–303 (IFGHFEKPIF…IRVIQVIMIR (128 aa)) coordinates a nucleoside 3',5'-cyclic phosphate. Disordered regions lie at residues 329–393 (NKNS…LHYH) and 409–438 (QQQQ…SSPT). Residues 338 to 367 (TGQTTSNVQSQTSQATQSRPSGTTRTPTSP) show a composition bias toward low complexity. Over residues 409–420 (QQQQSLNSPRRN) the composition is skewed to polar residues. Serine 421 is modified (phosphoserine). Residues 422 to 438 (TAHVSEAAAASTASSPT) are compositionally biased toward low complexity. Residues 456 to 586 (ELGL…VVRR) and 575 to 702 (IVLG…LSHR) contribute to the a nucleoside 3',5'-cyclic phosphate site. The PNPLA domain maps to 928-1094 (LVLGGGGARG…VNNLPGHLWR (167 aa)). A GXGXXG motif is present at residues 932–937 (GGGARG). Positions 959–963 (GVSIG) match the GXSXG motif. Catalysis depends on serine 961, which acts as the Nucleophile. Aspartate 1081 (proton acceptor) is an active-site residue. The DGA/G motif lies at 1081–1083 (DGG). Serine 1175 carries the phosphoserine modification. Disordered stretches follow at residues 1352 to 1374 (VDKA…PTPS) and 1400 to 1464 (ATNT…DTKN). Positions 1429–1444 (KRTEQDEHELEHEQVV) are enriched in basic and acidic residues. A compositionally biased stretch (polar residues) spans 1450–1464 (MDKQQGNTTNNDTKN).

It belongs to the NTE family. As to quaternary structure, interacts with Pka-C3; interaction inhibits the catalytic function of Pka-C3 and the esterase activity of sws.

Its subcellular location is the endoplasmic reticulum membrane. The enzyme catalyses a 1-acyl-sn-glycero-3-phosphocholine + H2O = sn-glycerol 3-phosphocholine + a fatty acid + H(+). Its function is as follows. Phospholipase B that deacylates intracellular phosphatidylcholine (PtdCho), generating glycerophosphocholine (GroPtdCho). This deacylation occurs at both sn-2 and sn-1 positions of PtdCho. Its specific chemical modification by certain organophosphorus (OP) compounds leads to distal axonopathy. Plays a role in the signaling mechanism between neurons and glia that regulates glia wrapping during development of the adult brain. Essential for membrane lipid homeostasis and cell survival in both neurons and glia of the adult brain. The protein is Neuropathy target esterase sws of Drosophila grimshawi (Hawaiian fruit fly).